The sequence spans 524 residues: Cytochrome P450 monooxygenase ankB (524 aa).

A helical membrane pass occupies residues 22–42 (FHALSIQAPGLLLGTLLFYLF). Cysteine 466 contributes to the heme binding site.

This sequence belongs to the cytochrome P450 family. The cofactor is heme.

Its subcellular location is the membrane. It catalyses the reaction cyclo(L-arginyl-tyrosyl) + reduced [NADPH--hemoprotein reductase] + O2 = cyclo(L-arginyl-L-dehydrotyrosyl) + oxidized [NADPH--hemoprotein reductase] + 2 H2O + H(+). Its pathway is alkaloid biosynthesis. Cytochrome P450 monooxygenase; part of the ank cluster that mediates the biosynthesis of NK13650 C, a highly modified cyclo-arginine-tyrosine dipeptide. AnkB is responsible for desaturation of the ankA product cyclo-Arg-Tyr diketopiperazine, likely through hydroxylation of the benzylic position followed by dehydration to yield a dehydro-cyclodipeptide. Within the pathway, the cyclodipeptide synthase ankA acts as the scaffold-generating enzyme and is responsible for formation of the cyclo-Arg-Tyr diketopiperazine (cRY) from L-Arg and L-Tyr. The ankA product cRY is desaturated by the cytochrome P450 monooxygenase ankB to yield a dehydro-cyclodipeptide intermediate. The FAD-dependent monooxygenase ankC then installs the m-OH, ankD catalyzes the attachment of L-homoserine, and ankE ligates citrate to the ankD product to yield NK13650 B. The O-methyltransferase ankF is responsible for methylation of the C-17 phenol group of NK13650 B to produce NK13650 D. Amidation of NK13650 D with L-Asp by ankG then leads to the production of NK13650 C, whereas amidation of NK13650 B produces NK13650 A. The sequence is that of Cytochrome P450 monooxygenase ankB from Aspergillus thermomutatus (Neosartorya pseudofischeri).